A 1051-amino-acid polypeptide reads, in one-letter code: Kinesin-like protein KIN-4B (1051 aa).

The interval 1-21 is disordered; the sequence is MESHSSLSSSSSSSPPSSLSS. The Kinesin motor domain occupies 25-380; that stretch reads CVKVAVNVRP…LKYANRARNI (356 aa). An ATP-binding site is contributed by 104-111; that stretch reads GQTGSGKT. Coiled-coil stretches lie at residues 414–448 and 540–644; these read ATSSEEVQVMREKIMKLESANEELSRELHIYRSKR and RQHF…KMKQ. A compositionally biased stretch (low complexity) spans 916-925; that stretch reads SSSYSGSSRS. Disordered stretches follow at residues 916 to 946 and 1029 to 1051; these read SSSYSGSSRSSSKHYGDNNASDDPSSPSSTY and MSKSHHDDEDDHSWNRHSMFQGA.

It belongs to the TRAFAC class myosin-kinesin ATPase superfamily. Kinesin family. KIN-4 subfamily. In terms of assembly, homodimer.

In terms of biological role, kinesin-like motor protein involved in the control of the oriented deposition of cellulose microfibrils. The chain is Kinesin-like protein KIN-4B from Arabidopsis thaliana (Mouse-ear cress).